The chain runs to 312 residues: MAAGQNGHEEWVGSAYLFVESSLDKVVLSDAYAHPQQKVAVYRALQAALAESGGSPDVLQMLKIHRSDPQLIVQLRFCGRQPCGRFLRAYREGALRAALQRSLAAALAQHSVPLQLELRAGAERLDALLADEERCLSCILAQQPDRLRDEELAELEDALRNLKCGSGARGGDGEVASAPLQPPVPSLSEVKPPPPPPPAQTFLFQGQPVVNRPLSLKDQQTFARSVGLKWRKVGRSLQRGCRALRDPALDSLAYEYEREGLYEQAFQLLRRFVQAEGRRATLQRLVEALEENELTSLAEDLLGLTDPNGGLA.

Positions 147–163 (LRDEELAELEDALRNLK) match the Nuclear export signal motif. A disordered region spans residues 170 to 195 (GGDGEVASAPLQPPVPSLSEVKPPPP). The Death domain maps to 179-289 (PLQPPVPSLS…ATLQRLVEAL (111 aa)). Pro residues predominate over residues 180–195 (LQPPVPSLSEVKPPPP). The interaction with KRT14 and KRT18 stretch occupies residues 222–289 (FARSVGLKWR…ATLQRLVEAL (68 aa)). Positions 231-244 (RKVGRSLQRGCRAL) match the Nuclear localization signal motif. 2 (Microbial infection) N-beta-linked (GlcNAc) arginine glycosylation sites follow: R235 and R245.

Stimulation of TNF-alpha receptor TNFRSF1A leads to the formation of two distinct signaling complexes. Plasma membrane-bound complex I is composed of TNFRSF1A, TRADD, RIPK1, TRAF2 and BIRC2/c-IAP1 or BIRC3 which interacts with CHUCK/IKK-alpha, IKBKB/IKK-beta and IKBKG/IKK-gamma promoting cell survival. Subsequently, TRADD, RIPK1 and TRAF2 dissociate from TNFRSF1A and form cytoplasmic complex II with FADD and caspase CASP8 promoting cell apoptosis. Within complex I, interacts with TNFRSF1A/TNFR1, TRAF2 and kinase RIPK1. Within complex I, interacts with TRPC4AP; the interaction promotes NF-kappa B activation. UXT1 associates with complex I; the interaction prevents the formation of complex II. Within complex I Interacts with scaffold protein DAB2IP. Interacts with autophagy receptor SQSTM1. Interacts with E3 ligase TRIP12. Interacts with kinase HIPK2. Interacts with keratin KRT14. Interacts with keratin KRT18. Interacts with keratins KRT16 and KRT17. Interacts with FADD. Interacts with TOMM70. Interacts with TMC8; the interaction impairs the formation of complex I and facilites complex II formation. (Microbial infection) Glycosylated at Arg-235 by enteropathogenic E.coli protein NleB1, C.rodentium protein NleB and S.typhimurium proteins Ssek1 and Ssek3: arginine GlcNAcylation prevents homotypic/heterotypic death domain interactions and assembly of the oligomeric TNFRSF1A/TNFR1 complex, thereby disrupting TNF signaling. In terms of tissue distribution, found in all examined tissues.

The protein localises to the nucleus. It is found in the cytoplasm. The protein resides in the cytoskeleton. In terms of biological role, adapter molecule for TNFRSF1A/TNFR1 that specifically associates with the cytoplasmic domain of activated TNFRSF1A/TNFR1 mediating its interaction with FADD. Overexpression of TRADD leads to two major TNF-induced responses, apoptosis and activation of NF-kappa-B. The nuclear form acts as a tumor suppressor by preventing ubiquitination and degradation of isoform p19ARF/ARF of CDKN2A by TRIP12: acts by interacting with TRIP12, leading to disrupt interaction between TRIP12 and isoform p19ARF/ARF of CDKN2A. In Homo sapiens (Human), this protein is Tumor necrosis factor receptor type 1-associated DEATH domain protein.